Consider the following 390-residue polypeptide: Putative gustatory receptor 59d (390 aa).

The Cytoplasmic portion of the chain corresponds to 1–38; it reads MADLLKLCLRIAYAYGRLTGVINFKIDLKTGQALVTRG. The helical transmembrane segment at 39-59 threads the bilayer; it reads ATLISVSTHLLIFALLLYQTM. Over 60–75 the chain is Extracellular; the sequence is RKSVVNVMWKYANSLH. A helical transmembrane segment spans residues 76 to 96; that stretch reads EYVFLVIAGFRVVCVFLELVS. The Cytoplasmic segment spans residues 97 to 128; sequence RWSQRRTFVRLFNSFRRLYQRNPDIIQYCRRS. Residues 129-149 traverse the membrane as a helical segment; it reads IVSKFFCVTMTETLHIIVTLA. The Extracellular segment spans residues 150-156; that stretch reads MMRNRLS. A helical membrane pass occupies residues 157 to 177; that stretch reads IALALRIWAVLSLTAIINVII. The Cytoplasmic portion of the chain corresponds to 178 to 252; the sequence is TQYYVATACV…NLSTAYEGEV (75 aa). A helical membrane pass occupies residues 253 to 273; sequence VCLVITYYLNMLGTSYLLFSI. Residues 274–283 lie on the Extracellular side of the membrane; sequence SKYGNFGNNL. The helical transmembrane segment at 284–304 threads the bilayer; that stretch reads LVIITLCGIVYFVFYVVDCWI. Topologically, residues 305–366 are cytoplasmic; the sequence is NAFNVFYLLD…MYGLFEFGRG (62 aa). A helical transmembrane segment spans residues 367-383; that stretch reads TSFAVFNSLLTHSLLLI. At 384 to 390 the chain is on the extracellular side; sequence QYDVQNF.

The protein belongs to the insect chemoreceptor superfamily. Gustatory receptor (GR) family. Gr22e subfamily. Expressed in the adult labellar chemosensory neurons. In larvae, is expressed in neurons of the terminal external chemosensory organ as well as in the dorsal pharyngeal sense organ.

It is found in the cell membrane. Its function is as follows. Probable gustatory receptor which mediates acceptance or avoidance behavior, depending on its substrates. The protein is Putative gustatory receptor 59d (Gr59d) of Drosophila melanogaster (Fruit fly).